The sequence spans 401 residues: (1R,4R,5S)-(-)-guaia-6,10(14)-diene synthase (401 aa).

The disordered stretch occupies residues 1-21 (MVKFDSGSESEMTNGDDLHIN). 2 residues coordinate Mg(2+): D134 and E139. The DDXXD motif signature appears at 134–138 (DDQFD). R242 contributes to the substrate binding site. Residues N288 and S292 each coordinate Mg(2+). Substrate is bound at residue K295. Position 296 (D296) interacts with Mg(2+). Residue 375-376 (RY) participates in substrate binding.

The protein belongs to the terpene synthase family. Mg(2+) is required as a cofactor.

The catalysed reaction is (2E,6E)-farnesyl diphosphate = (1R,4R,5S)-(-)-guaia-6,10(14)-diene + diphosphate. Its pathway is secondary metabolite biosynthesis; terpenoid biosynthesis. Functionally, catalyzes the conversion of (2E,6E)-farnesyl diphosphate (FPP) to yield the bicyclic sesquiterpene guaia-6,10(14)-diene via a 1,10-cyclization, which requires the abstraction of the pyrophosphate from FPP to yield the (E,E)-germacradienyl cation. The only accepted substrate is farnesyl diphosphate (FPP). The sequence is that of (1R,4R,5S)-(-)-guaia-6,10(14)-diene synthase from Fusarium proliferatum (strain ET1) (Orchid endophyte fungus).